Reading from the N-terminus, the 471-residue chain is Putative multidrug resistance protein MdtD (471 aa).

At 1-11 (MTDLPDSTRWQ) the chain is on the periplasmic side. A helical membrane pass occupies residues 12-32 (LWIVAFGFFMQSLDTTIVNTA). Residues 33–48 (LPSMAQSLGESPLHMH) lie on the Cytoplasmic side of the membrane. Residues 49–69 (MVIVSYVLTVAVMLPASGWLA) form a helical membrane-spanning segment. The Periplasmic segment spans residues 70 to 76 (DKVGVRN). The chain crosses the membrane as a helical span at residues 77–97 (IFFTAIVLFTLGSLFCALSGT). Residues 98-101 (LNEL) lie on the Cytoplasmic side of the membrane. Residues 102–124 (LLARALQGVGGAMMVPVGRLTVM) traverse the membrane as a helical segment. Residues 125-137 (KIVPREQYMAAMT) lie on the Periplasmic side of the membrane. A helical transmembrane segment spans residues 138–158 (FVTLPGQVGPLLGPALGGLLV). Residues 159-164 (EYASWH) lie on the Cytoplasmic side of the membrane. The helical transmembrane segment at 165–185 (WIFLINIPVGIIGAIATLMLM) threads the bilayer. Topologically, residues 186–196 (PNYTMQTRRFD) are periplasmic. Residues 197–217 (LSGFLLLAVGMAVLTLALDGS) traverse the membrane as a helical segment. Over 218 to 224 (KGTGLSP) the chain is Cytoplasmic. The helical transmembrane segment at 225 to 245 (LTIAGLVAVGVVALVLYLLHA) threads the bilayer. The Periplasmic portion of the chain corresponds to 246–262 (RNNNRALFSLKLFRTRT). The chain crosses the membrane as a helical span at residues 263–283 (FSLGLAGSFAGRIGSGMLPFM). Over 284-285 (TP) the chain is Cytoplasmic. Residues 286 to 306 (VFLQIGLGFSPFHAGLMMIPM) form a helical membrane-spanning segment. Residues 307–341 (VLGSMGMKRIVVQVVNCFGYRRVLVATTLGLSLVT) lie on the Periplasmic side of the membrane. A helical membrane pass occupies residues 342 to 362 (LLFMTTALLGWYYVLPFVLFL). Topologically, residues 363-395 (QGMVNSTRFSSMNTLTLKDLPDNLASSGNSLLS) are cytoplasmic. A helical transmembrane segment spans residues 396–416 (MIMQLSMSIGVTIAGLLLGLF). Topologically, residues 417–430 (GSQHVSVDSGTTQT) are periplasmic. The chain crosses the membrane as a helical span at residues 431-451 (VFMYTWLSMALIIALPAFIFA). Residues 452 to 471 (RVPNDTHQNVAISRRKRSAQ) are Cytoplasmic-facing.

This sequence belongs to the major facilitator superfamily. TCR/Tet family.

It is found in the cell inner membrane. This chain is Putative multidrug resistance protein MdtD, found in Escherichia coli O139:H28 (strain E24377A / ETEC).